A 335-amino-acid chain; its full sequence is 3-dehydroquinate synthase (335 aa).

Residues 56–61, 90–94, 114–115, Lys-127, Lys-135, and 153–156 contribute to the NAD(+) site; these read DGEKYK, GVITD, TT, and FLKT. 3 residues coordinate Zn(2+): Glu-168, His-227, and His-243.

It belongs to the sugar phosphate cyclases superfamily. Dehydroquinate synthase family. NAD(+) is required as a cofactor. It depends on Co(2+) as a cofactor. The cofactor is Zn(2+).

The protein localises to the cytoplasm. It carries out the reaction 7-phospho-2-dehydro-3-deoxy-D-arabino-heptonate = 3-dehydroquinate + phosphate. Its pathway is metabolic intermediate biosynthesis; chorismate biosynthesis; chorismate from D-erythrose 4-phosphate and phosphoenolpyruvate: step 2/7. Functionally, catalyzes the conversion of 3-deoxy-D-arabino-heptulosonate 7-phosphate (DAHP) to dehydroquinate (DHQ). In Pyrococcus furiosus (strain ATCC 43587 / DSM 3638 / JCM 8422 / Vc1), this protein is 3-dehydroquinate synthase.